The sequence spans 559 residues: MPSIKSDIEIARAATKRPIFEIGAKLGIAAEQLVPYGHDKAKVSAEFIAAQAGKKDGKLILVTAINPTPAGEGKTTTTVGLGDGLNRIGKKAIVCIREASLGPCFGVKGGAAGGGYAQVVPMEDINLHFTGDFHAITSAHNLLAAIIDNHIYWGNEENIDIRRITWRRVMDMNDRALRSMISSLGGVANGFPRQGGFDITVASEVMAILCLATDLKDLERRLGDIIIGYRFDKTPVHARDLKADGAMAVLLKDAMQPNLVQTLESNPAFVHGGPFANIAHGCNSVTATKTALKLGEYVVTEAGFGADLGAEKFFDIKCRKAGLRPDAAVIVATVRALKMNGGVKKEDLGTEDVAALKKGCANLGRHVANVRRFGVPVVVAINHFVSDTDAEIAAVKEFVSRLGAEAILCQHWAKGSAGIEELAHKVVELAESGQAKFQPLYGDDISLFEKIEIIASKIYHAGEVTADKAVRDQLQSWEEQGYGKLPVCMAKTQYSFSTDPNLRGAPEGHIVSVREVRLSAGAGFVVAITGEIMTMPGLPKSPSAERIFLNDQGYIEGLF.

68–75 serves as a coordination point for ATP; that stretch reads TPAGEGKT.

The protein belongs to the formate--tetrahydrofolate ligase family.

It catalyses the reaction (6S)-5,6,7,8-tetrahydrofolate + formate + ATP = (6R)-10-formyltetrahydrofolate + ADP + phosphate. It functions in the pathway one-carbon metabolism; tetrahydrofolate interconversion. The protein is Formate--tetrahydrofolate ligase of Rhizobium etli (strain ATCC 51251 / DSM 11541 / JCM 21823 / NBRC 15573 / CFN 42).